Reading from the N-terminus, the 253-residue chain is Hydroxyacylglutathione hydrolase (253 aa).

Positions 54, 56, 58, 59, 110, 127, and 165 each coordinate Zn(2+).

Belongs to the metallo-beta-lactamase superfamily. Glyoxalase II family. In terms of assembly, monomer. Zn(2+) serves as cofactor.

It carries out the reaction an S-(2-hydroxyacyl)glutathione + H2O = a 2-hydroxy carboxylate + glutathione + H(+). Its pathway is secondary metabolite metabolism; methylglyoxal degradation; (R)-lactate from methylglyoxal: step 2/2. Its function is as follows. Thiolesterase that catalyzes the hydrolysis of S-D-lactoyl-glutathione to form glutathione and D-lactic acid. The chain is Hydroxyacylglutathione hydrolase from Idiomarina loihiensis (strain ATCC BAA-735 / DSM 15497 / L2-TR).